A 422-amino-acid chain; its full sequence is Histidine--tRNA ligase (422 aa).

Belongs to the class-II aminoacyl-tRNA synthetase family. As to quaternary structure, homodimer.

Its subcellular location is the cytoplasm. It catalyses the reaction tRNA(His) + L-histidine + ATP = L-histidyl-tRNA(His) + AMP + diphosphate + H(+). This chain is Histidine--tRNA ligase, found in Aliivibrio fischeri (strain ATCC 700601 / ES114) (Vibrio fischeri).